Reading from the N-terminus, the 274-residue chain is Large ribosomal subunit protein uL2 (274 aa).

Disordered regions lie at residues 28 to 54 (APHAPLLEKKSKSGGRNNNGRITTRHI) and 224 to 274 (VAMN…RRRK). Residues 263–274 (KRTDKMIVRRRK) are compositionally biased toward basic and acidic residues.

This sequence belongs to the universal ribosomal protein uL2 family. As to quaternary structure, part of the 50S ribosomal subunit. Forms a bridge to the 30S subunit in the 70S ribosome.

One of the primary rRNA binding proteins. Required for association of the 30S and 50S subunits to form the 70S ribosome, for tRNA binding and peptide bond formation. It has been suggested to have peptidyltransferase activity; this is somewhat controversial. Makes several contacts with the 16S rRNA in the 70S ribosome. In Pseudomonas savastanoi pv. phaseolicola (strain 1448A / Race 6) (Pseudomonas syringae pv. phaseolicola (strain 1448A / Race 6)), this protein is Large ribosomal subunit protein uL2.